The sequence spans 238 residues: Ribosomal RNA small subunit methyltransferase G (238 aa).

S-adenosyl-L-methionine-binding positions include Gly79, Phe84, 102-104 (EAT), 130-131 (IE), and Arg149.

Belongs to the methyltransferase superfamily. RNA methyltransferase RsmG family.

The protein resides in the cytoplasm. Specifically methylates the N7 position of a guanine in 16S rRNA. The chain is Ribosomal RNA small subunit methyltransferase G from Chloroflexus aggregans (strain MD-66 / DSM 9485).